A 329-amino-acid polypeptide reads, in one-letter code: Quinate dehydrogenase (329 aa).

The enzyme catalyses L-quinate + NAD(+) = 3-dehydroquinate + NADH + H(+). It participates in aromatic compound metabolism; 3,4-dihydroxybenzoate biosynthesis; 3-dehydroquinate from D-quinate (NAD(+) route): step 1/1. This chain is Quinate dehydrogenase (qutB), found in Emericella nidulans (strain FGSC A4 / ATCC 38163 / CBS 112.46 / NRRL 194 / M139) (Aspergillus nidulans).